Consider the following 183-residue polypeptide: Ras-related protein Rap-2a (183 aa).

10–17 (GSGGVGKS) provides a ligand contact to GTP. An Effector region motif is present at residues 32-40 (YDPTIEDFY). A glycan ((Microbial infection) O-linked (Glc) threonine; by C.difficile toxin TcdA, and by P.sordellii toxin TcsL) is linked at Thr35. GTP-binding positions include 57 to 61 (DTAGT) and 116 to 119 (NKVD). S-palmitoyl cysteine attachment occurs at residues Cys176 and Cys177. The residue at position 180 (Cys180) is a Cysteine methyl ester. Cys180 carries the S-farnesyl cysteine lipid modification. The propeptide at 181–183 (NIQ) is removed in mature form.

This sequence belongs to the small GTPase superfamily. Ras family. Interacts (GTP-bound form) with RUNDC3A. Interacts with RGS14; the interaction is GTP-dependent. Interacts with PLCE1. Interacts with ARHGAP29, SGSM1, SGSM2 and SGSM3. Interacts (GTP-bound form preferentially) with TNIK (via the CNH domain); the interaction is direct and recruits RAP2A to the E3 ubiquitin ligase NEDD4. Interacts with MINK1. Interacts (GTP-bound form preferentially) with MAP4K4. Interacts with cytoskeletal actin. Post-translationally, ubiquitinated; undergoes 'Lys-63' monoubiquitination and diubiquitination by NEDD4. Multiple lysine residues are probably modified. Ubiquitination requires TNIK, prevents interaction with effectors and inactivates RAP2A. Ubiquitination by the ECS(RAB40B) complex leads to RAP2A localization to lamellipodia plasma membrane, activation, and regulation of sorting at early endosomes for recycling to the lamellipodia plasma membrane. Palmitoylated. Palmitoylation is required for association with recycling endosome membranes and activation of TNIK. In terms of processing, (Microbial infection) Glucosylated at Thr-35 by C.difficile toxin TcdA in the colonic epithelium, and by P.sordellii toxin TcsL in the vascular endothelium.

Its subcellular location is the midbody. It is found in the cell projection. It localises to the lamellipodium membrane. The protein resides in the golgi apparatus. The protein localises to the recycling endosome membrane. Its subcellular location is the lysosome. It catalyses the reaction GTP + H2O = GDP + phosphate + H(+). Its activity is regulated as follows. Activated by the guanine nucleotide-exchange factors RAPGEF3 and RAPGEF4 in a cAMP-dependent manner. Nucleotide exchange is also specifically stimulated by RAPGEF5, RASGEF1A and RASGEF1B. Functionally, small GTP-binding protein which cycles between a GDP-bound inactive and a GTP-bound active form. In its active form interacts with and regulates several effectors including MAP4K4, MINK1 and TNIK. Part of a signaling complex composed of NEDD4, RAP2A and TNIK which regulates neuronal dendrite extension and arborization during development. More generally, it is part of several signaling cascades and regulates cytoskeletal rearrangements, cell migration, cell adhesion and cell spreading. This Homo sapiens (Human) protein is Ras-related protein Rap-2a.